Reading from the N-terminus, the 203-residue chain is Urease accessory protein UreG (203 aa).

Gly14–Thr21 serves as a coordination point for GTP.

It belongs to the SIMIBI class G3E GTPase family. UreG subfamily. Homodimer. UreD, UreF and UreG form a complex that acts as a GTP-hydrolysis-dependent molecular chaperone, activating the urease apoprotein by helping to assemble the nickel containing metallocenter of UreC. The UreE protein probably delivers the nickel.

It localises to the cytoplasm. Facilitates the functional incorporation of the urease nickel metallocenter. This process requires GTP hydrolysis, probably effectuated by UreG. This is Urease accessory protein UreG from Rhizobium rhizogenes (strain K84 / ATCC BAA-868) (Agrobacterium radiobacter).